The sequence spans 426 residues: Kynureninase (426 aa).

Pyridoxal 5'-phosphate contacts are provided by residues L110, S111, 138 to 141 (FPSD), D223, H226, and Y248. At K249 the chain carries N6-(pyridoxal phosphate)lysine. Pyridoxal 5'-phosphate contacts are provided by W279 and N307.

This sequence belongs to the kynureninase family. Homodimer. It depends on pyridoxal 5'-phosphate as a cofactor.

The catalysed reaction is L-kynurenine + H2O = anthranilate + L-alanine + H(+). It catalyses the reaction 3-hydroxy-L-kynurenine + H2O = 3-hydroxyanthranilate + L-alanine + H(+). It functions in the pathway amino-acid degradation; L-kynurenine degradation; L-alanine and anthranilate from L-kynurenine: step 1/1. Its pathway is cofactor biosynthesis; NAD(+) biosynthesis; quinolinate from L-kynurenine: step 2/3. In terms of biological role, catalyzes the cleavage of L-kynurenine (L-Kyn) and L-3-hydroxykynurenine (L-3OHKyn) into anthranilic acid (AA) and 3-hydroxyanthranilic acid (3-OHAA), respectively. The chain is Kynureninase from Myxococcus xanthus (strain DK1622).